Here is a 176-residue protein sequence, read N- to C-terminus: RNA 2',3'-cyclic phosphodiesterase (176 aa).

Histidine 28 serves as the catalytic Proton donor. 2 consecutive short sequence motifs (HXTX) follow at residues 28-31 and 113-116; these read HITL and HVTL. Histidine 113 (proton acceptor) is an active-site residue.

The protein belongs to the 2H phosphoesterase superfamily. ThpR family.

The catalysed reaction is a 3'-end 2',3'-cyclophospho-ribonucleotide-RNA + H2O = a 3'-end 2'-phospho-ribonucleotide-RNA + H(+). In terms of biological role, hydrolyzes RNA 2',3'-cyclic phosphodiester to an RNA 2'-phosphomonoester. This Aeropyrum pernix (strain ATCC 700893 / DSM 11879 / JCM 9820 / NBRC 100138 / K1) protein is RNA 2',3'-cyclic phosphodiesterase.